Here is a 539-residue protein sequence, read N- to C-terminus: Dopamine receptor 2 (539 aa).

The Extracellular segment spans residues Met1–Ala113. N-linked (GlcNAc...) asparagine glycans are attached at residues Asn5, Asn31, Asn47, and Asn68. A helical membrane pass occupies residues Phe114–Ile134. At Arg135–Tyr145 the chain is on the cytoplasmic side. A helical transmembrane segment spans residues Phe146–Ala166. The Extracellular portion of the chain corresponds to Leu167–Asp189. The cysteines at positions 182 and 261 are disulfide-linked. The helical transmembrane segment at Val190–Asp206 threads the bilayer. Residues Arg207–Ala227 lie on the Cytoplasmic side of the membrane. A helical transmembrane segment spans residues Gly228–Trp248. Residues Arg249–His266 lie on the Extracellular side of the membrane. Residues Leu267 to Phe287 form a helical membrane-spanning segment. The Cytoplasmic portion of the chain corresponds to Thr288–Thr420. The disordered stretch occupies residues Gly326 to Leu387. A compositionally biased stretch (gly residues) spans Ser337 to Ser352. Residues Ser356–His367 are compositionally biased toward basic residues. Residues Leu421–Leu441 traverse the membrane as a helical segment. Over Ser442–Glu453 the chain is Extracellular. Residues Ile454–Tyr474 form a helical membrane-spanning segment. At Ala475 to Ile539 the chain is on the cytoplasmic side. Residues Cys492 and Cys493 are each lipidated (S-palmitoyl cysteine).

Belongs to the G-protein coupled receptor 1 family. As to expression, expressed in both central and peripheral nervous systems.

It localises to the cell membrane. Its function is as follows. Receptor for dopamine. The activity of this receptor is mediated by G proteins which activate adenylyl cyclase. Also capable of generating a calcium signal. In terms of antagonist responses, would be classed with the D1-like dopamine receptor group. This receptor is an attractive candidate for initiating biochemical cascades underlying olfactory learning. In Drosophila melanogaster (Fruit fly), this protein is Dopamine receptor 2 (Dop1R2).